Consider the following 225-residue polypeptide: Uracil-DNA glycosylase (225 aa).

The Proton acceptor role is filled by D64.

This sequence belongs to the uracil-DNA glycosylase (UDG) superfamily. UNG family.

It is found in the cytoplasm. It catalyses the reaction Hydrolyzes single-stranded DNA or mismatched double-stranded DNA and polynucleotides, releasing free uracil.. In terms of biological role, excises uracil residues from the DNA which can arise as a result of misincorporation of dUMP residues by DNA polymerase or due to deamination of cytosine. The polypeptide is Uracil-DNA glycosylase (Agathobacter rectalis (strain ATCC 33656 / DSM 3377 / JCM 17463 / KCTC 5835 / VPI 0990) (Eubacterium rectale)).